The primary structure comprises 648 residues: Siderophore transporter MYCGRDRAFT_70577 (648 aa).

2 stretches are compositionally biased toward basic and acidic residues: residues 1-11 (MRTSSESHSRS) and 29-46 (SASK…DTSI). Positions 1–58 (MRTSSESHSRSDAFNGKNDASQVTVDSDSASKDHHDHDHHHKDTSINERQSQHVHQQA) are disordered. Residues 47–58 (NERQSQHVHQQA) are compositionally biased toward polar residues. 11 helical membrane passes run 79–99 (LLLY…ALDQ), 151–171 (VVVL…QGLA), 205–225 (AFWS…NGFI), 236–256 (WGLG…IWTL), 303–323 (LIGL…LNLA), 336–356 (IAML…EALL), 409–429 (TIFI…GGLI), 438–458 (TLMV…LDGN), 468–488 (LAVS…ARVG), 500–520 (VVIS…STIA), and 578–598 (GIIL…SCLM).

Belongs to the major facilitator superfamily.

It localises to the cell membrane. In terms of biological role, siderophore transporter; part of the gene cluster 14 that mediates the biosynthesis of a ferrichrome A-like siderophors which may contribute to organismal virulence. This is Siderophore transporter MYCGRDRAFT_70577 from Zymoseptoria tritici (strain CBS 115943 / IPO323) (Speckled leaf blotch fungus).